Consider the following 339-residue polypeptide: Glyceraldehyde-3-phosphate dehydrogenase (339 aa).

Residues 13 to 14 (RI), Asp-35, and Lys-84 contribute to the NAD(+) site. Residues 156-158 (SCT), Thr-187, 216-217 (TG), and Arg-239 each bind D-glyceraldehyde 3-phosphate. Cys-157 functions as the Nucleophile in the catalytic mechanism. Residue Asn-321 coordinates NAD(+).

Belongs to the glyceraldehyde-3-phosphate dehydrogenase family. As to quaternary structure, homotetramer.

The protein localises to the cytoplasm. The catalysed reaction is D-glyceraldehyde 3-phosphate + phosphate + NAD(+) = (2R)-3-phospho-glyceroyl phosphate + NADH + H(+). The protein operates within carbohydrate degradation; glycolysis; pyruvate from D-glyceraldehyde 3-phosphate: step 1/5. This chain is Glyceraldehyde-3-phosphate dehydrogenase, found in Onchocerca volvulus.